Reading from the N-terminus, the 227-residue chain is MPDMTMKSQPDRLYGRQRGHALRPRQQRLLDLTLPRLRYAGPSSLRGVSPLWLEIGFGGGEHAVAQIEAHPDVTLIACEVFENGLCSLLSRLLPEPLDEETAPLPGNLRVWDDDARPLLRDLPDQVLDRVFLMFPDPWPKARHAKRRFVHPENAATLARVMKPGAEWRIASDDPTYQAWVPEVMERQTAFELLAVSNERPEGWPPTRYEAKAIRAGRQPLYWRYVRR.

The disordered stretch occupies residues 1-21 (MPDMTMKSQPDRLYGRQRGHA). S-adenosyl-L-methionine contacts are provided by Glu-54, Glu-79, Asp-114, and Asp-136. The active site involves Asp-136. Substrate is bound by residues Lys-140, Asp-172, and 206-209 (TRYE).

It belongs to the class I-like SAM-binding methyltransferase superfamily. TrmB family.

The enzyme catalyses guanosine(46) in tRNA + S-adenosyl-L-methionine = N(7)-methylguanosine(46) in tRNA + S-adenosyl-L-homocysteine. It functions in the pathway tRNA modification; N(7)-methylguanine-tRNA biosynthesis. In terms of biological role, catalyzes the formation of N(7)-methylguanine at position 46 (m7G46) in tRNA. This is tRNA (guanine-N(7)-)-methyltransferase from Granulibacter bethesdensis (strain ATCC BAA-1260 / CGDNIH1).